We begin with the raw amino-acid sequence, 22 residues long: FVGAALKVLANVLPPVISWIKQ.

Position 22 is a glutamine amide (Gln-22).

Expressed by the skin glands.

Its subcellular location is the secreted. In Rana arvalis (Moor frog), this protein is Melittin-related peptide FQ-22-1.